Consider the following 487-residue polypeptide: Signal recognition particle subunit SRP54 (487 aa).

Positions 1–295 (MVLSQLGSSL…DAESFVRKLL (295 aa)) are G-domain. GTP-binding positions include 108–115 (GLQGAGKT), 190–194 (DTSGR), and 248–251 (TKLD). The M-domain stretch occupies residues 296 to 487 (GMGDLKGIAK…LGGTGKKGKK (192 aa)).

It belongs to the GTP-binding SRP family. SRP54 subfamily. As to quaternary structure, component of a signal recognition particle (SRP) complex that consists of a 7SL RNA molecule of 300 nucleotides and six protein subunits: SRP72, SRP68, SRP54, SRP19, SRP14 and SRP9.

The protein localises to the cytoplasm. The protein resides in the endoplasmic reticulum. The enzyme catalyses GTP + H2O = GDP + phosphate + H(+). In terms of biological role, component of the signal recognition particle (SRP) complex, a ribonucleoprotein complex that mediates the cotranslational targeting of secretory and membrane proteins to the endoplasmic reticulum (ER). As part of the SRP complex, associates with the SRP receptor (SR) component SRPRA to target secretory proteins to the endoplasmic reticulum membrane. Binds to the signal sequence of presecretory proteins when they emerge from the ribosomes. Displays basal GTPase activity, and stimulates reciprocal GTPase activation of the SR subunit SRPRA. Forms a guanosine 5'-triphosphate (GTP)-dependent complex with the SR subunit SRPRA. SR compaction and GTPase mediated rearrangement of SR drive SRP-mediated cotranslational protein translocation into the ER. Requires the presence of SRP9/SRP14 and/or SRP19 to stably interact with RNA. The chain is Signal recognition particle subunit SRP54 from Entamoeba histolytica (strain ATCC 30459 / HM-1:IMSS / ABRM).